We begin with the raw amino-acid sequence, 668 residues long: DNA ligase (668 aa).

NAD(+)-binding positions include 35 to 39 and 83 to 84; these read DKEYD and SL. The N6-AMP-lysine intermediate role is filled by Lys125. 3 residues coordinate NAD(+): Arg147, Glu181, and Lys317. Residues Cys410, Cys413, Cys426, and Cys432 each coordinate Zn(2+). Residues 591 to 668 form the BRCT domain; that stretch reads KKDNKFNGKT…TEEEFNEMIN (78 aa).

This sequence belongs to the NAD-dependent DNA ligase family. LigA subfamily. The cofactor is Mg(2+). Requires Mn(2+) as cofactor.

The catalysed reaction is NAD(+) + (deoxyribonucleotide)n-3'-hydroxyl + 5'-phospho-(deoxyribonucleotide)m = (deoxyribonucleotide)n+m + AMP + beta-nicotinamide D-nucleotide.. Its function is as follows. DNA ligase that catalyzes the formation of phosphodiester linkages between 5'-phosphoryl and 3'-hydroxyl groups in double-stranded DNA using NAD as a coenzyme and as the energy source for the reaction. It is essential for DNA replication and repair of damaged DNA. This Clostridium tetani (strain Massachusetts / E88) protein is DNA ligase.